Here is a 452-residue protein sequence, read N- to C-terminus: Probable 1,4-beta-D-glucan cellobiohydrolase A (452 aa).

The first 17 residues, 1–17, serve as a signal peptide directing secretion; it reads MHQRALLFSALLTAVRA. Asn-62 carries N-linked (GlcNAc...) asparagine glycosylation. Glu-227 (nucleophile) is an active-site residue. Residue Glu-232 is the Proton donor of the active site. 4 N-linked (GlcNAc...) asparagine glycosylation sites follow: Asn-285, Asn-335, Asn-402, and Asn-445.

This sequence belongs to the glycosyl hydrolase 7 (cellulase C) family.

The protein localises to the secreted. The enzyme catalyses Hydrolysis of (1-&gt;4)-beta-D-glucosidic linkages in cellulose and cellotetraose, releasing cellobiose from the non-reducing ends of the chains.. The biological conversion of cellulose to glucose generally requires three types of hydrolytic enzymes: (1) Endoglucanases which cut internal beta-1,4-glucosidic bonds; (2) Exocellobiohydrolases that cut the disaccharide cellobiose from the non-reducing end of the cellulose polymer chain; (3) Beta-1,4-glucosidases which hydrolyze the cellobiose and other short cello-oligosaccharides to glucose. In Aspergillus niger (strain ATCC MYA-4892 / CBS 513.88 / FGSC A1513), this protein is Probable 1,4-beta-D-glucan cellobiohydrolase A (cbhA).